The primary structure comprises 69 residues: Putative membrane protein insertion efficiency factor (69 aa).

The protein belongs to the UPF0161 family.

It is found in the cell membrane. In terms of biological role, could be involved in insertion of integral membrane proteins into the membrane. In Clostridium perfringens (strain SM101 / Type A), this protein is Putative membrane protein insertion efficiency factor.